The following is an 867-amino-acid chain: KH domain-containing protein akap-1 (867 aa).

A helical membrane pass occupies residues histidine 108 to asparagine 128. Disordered stretches follow at residues serine 145–valine 458 and histidine 481–threonine 523. Positions alanine 152–glycine 162 are enriched in polar residues. Composition is skewed to basic and acidic residues over residues glutamine 186–glutamine 211, threonine 218–alanine 239, serine 247–valine 275, and glutamine 298–leucine 307. Polar residues predominate over residues threonine 336 to leucine 345. Residues glutamate 363 to arginine 383 show a composition bias toward basic and acidic residues. Residues asparagine 397–glycine 408 show a composition bias toward basic residues. 2 stretches are compositionally biased toward basic and acidic residues: residues leucine 441–valine 458 and histidine 481–aspartate 490. Over residues leucine 494–glycine 507 the composition is skewed to polar residues. Residues leucine 528–leucine 595 enclose the KH domain. In terms of domain architecture, Tudor spans proline 689–leucine 747.

It localises to the membrane. In Caenorhabditis elegans, this protein is KH domain-containing protein akap-1.